A 577-amino-acid chain; its full sequence is Proline--tRNA ligase (577 aa).

The protein belongs to the class-II aminoacyl-tRNA synthetase family. ProS type 1 subfamily. Homodimer.

Its subcellular location is the cytoplasm. It carries out the reaction tRNA(Pro) + L-proline + ATP = L-prolyl-tRNA(Pro) + AMP + diphosphate. Catalyzes the attachment of proline to tRNA(Pro) in a two-step reaction: proline is first activated by ATP to form Pro-AMP and then transferred to the acceptor end of tRNA(Pro). As ProRS can inadvertently accommodate and process non-cognate amino acids such as alanine and cysteine, to avoid such errors it has two additional distinct editing activities against alanine. One activity is designated as 'pretransfer' editing and involves the tRNA(Pro)-independent hydrolysis of activated Ala-AMP. The other activity is designated 'posttransfer' editing and involves deacylation of mischarged Ala-tRNA(Pro). The misacylated Cys-tRNA(Pro) is not edited by ProRS. The chain is Proline--tRNA ligase from Helicobacter pylori (strain HPAG1).